The sequence spans 68 residues: Peptide Hp1412 (68 aa).

A signal peptide spans 1 to 23; that stretch reads MKTHFAIFLITLFLFQMFSQSDA. Cys36 bears the Cysteine amide mark. Positions 40–68 are excised as a propeptide; that stretch reads GLSDLYDLDEMFDGEISQADIDFLKELMR.

The protein belongs to the non-disulfide-bridged peptide (NDBP) superfamily. Short antimicrobial peptide (group 4) family. Expressed by the venom gland.

The protein resides in the secreted. It is found in the target cell membrane. Its function is as follows. Amphipathic peptide with antimicrobial activity. This chain is Peptide Hp1412, found in Heterometrus petersii (Asian forest scorpion).